Reading from the N-terminus, the 238-residue chain is 7-cyano-7-deazaguanine synthase (238 aa).

12–22 (FSGGQDSGTCL) is an ATP binding site. Zn(2+) contacts are provided by cysteine 200, cysteine 215, cysteine 218, and cysteine 221.

It belongs to the QueC family. The cofactor is Zn(2+).

The catalysed reaction is 7-carboxy-7-deazaguanine + NH4(+) + ATP = 7-cyano-7-deazaguanine + ADP + phosphate + H2O + H(+). Its pathway is purine metabolism; 7-cyano-7-deazaguanine biosynthesis. In terms of biological role, catalyzes the ATP-dependent conversion of 7-carboxy-7-deazaguanine (CDG) to 7-cyano-7-deazaguanine (preQ(0)). The sequence is that of 7-cyano-7-deazaguanine synthase from Lawsonia intracellularis (strain PHE/MN1-00).